A 363-amino-acid chain; its full sequence is 5-hydroxytryptamine receptor 1E (363 aa).

Topologically, residues 1–21 (MNITNCTTEASMAIRPKTITE) are extracellular. 2 N-linked (GlcNAc...) asparagine glycosylation sites follow: N2 and N5. Residues 22 to 45 (KMLICMTLVVITTLTTLLNLAVIM) form a helical membrane-spanning segment. Topologically, residues 46–59 (AIGTTKKLHQPANY) are cytoplasmic. A helical transmembrane segment spans residues 60–84 (LICSLAVTDLLVAVLVMPLSIIYIV). The Extracellular segment spans residues 85 to 92 (MDRWKLGY). Residues 93–118 (FLCEVWLSVDMTCCTCSILHLCVIAL) form a helical membrane-spanning segment. An intrachain disulfide couples C95 to C173. Positions 102 and 106 each coordinate serotonin. Positions 119–121 (DRY) match the DRY motif; important for ligand-induced conformation changes motif. The Cytoplasmic segment spans residues 119 to 138 (DRYWAITNAIEYARKRTAKR). Residues 139–157 (AALMILTVWTISIFISMPP) form a helical membrane-spanning segment. At 158-179 (LFWRSHRRLSPPPSQCTIQHDH) the chain is on the extracellular side. The chain crosses the membrane as a helical span at residues 180–203 (VIYTIYSTLGAFYIPLTLILILYY). The Cytoplasmic segment spans residues 204–291 (RIYHAAKSLY…SSTRERKAAR (88 aa)). A helical transmembrane segment spans residues 292 to 316 (ILGLILGAFILSWLPFFIKELIVGL). Residues 317–322 (SIYTVS) lie on the Extracellular side of the membrane. The helical transmembrane segment at 323 to 345 (SEVADFLTWLGYVNSLINPLLYT) threads the bilayer. An NPxxY motif; important for ligand-induced conformation changes and signaling motif is present at residues 340-344 (NPLLY). The Cytoplasmic portion of the chain corresponds to 346 to 363 (SFNEDFKLAFKKLIRCRE).

This sequence belongs to the G-protein coupled receptor 1 family.

It is found in the cell membrane. In terms of biological role, G-protein coupled receptor for 5-hydroxytryptamine (serotonin). Also functions as a receptor for various alkaloids and psychoactive substances. Ligand binding causes a conformation change that triggers signaling via guanine nucleotide-binding proteins (G proteins) and modulates the activity of downstream effectors, such as adenylate cyclase. HTR1E is coupled to G(i)/G(o) G alpha proteins and mediates inhibitory neurotransmission by inhibiting adenylate cyclase activity. This is 5-hydroxytryptamine receptor 1E (HTR1E) from Pan troglodytes (Chimpanzee).